A 270-amino-acid polypeptide reads, in one-letter code: MENQKIGFIGAGKMGSALMQGTIKAGIVTPENIGASDVYEPFLKDLQAKLGIRVSTDNAVIVRESDILILAVKPQTLSSVLSNLKNEITSEKLVISIAAGVPLSTYEDALLEGTRVVRVMPNIAATVSEAASGIAPGKNATPEDLKAALEIFSAVGTAVQVPESLMDAVTGLSGSGPAFIFPVIEAMADGAVLEGMDRKSALTLAAQTVLGAAKMALETGMHPGELKDMVTSPAGTTIQGIHSLEEAGIRAAFMNAVIRASERSKELGKK.

Belongs to the pyrroline-5-carboxylate reductase family.

The protein localises to the cytoplasm. It carries out the reaction L-proline + NADP(+) = (S)-1-pyrroline-5-carboxylate + NADPH + 2 H(+). The enzyme catalyses L-proline + NAD(+) = (S)-1-pyrroline-5-carboxylate + NADH + 2 H(+). It functions in the pathway amino-acid biosynthesis; L-proline biosynthesis; L-proline from L-glutamate 5-semialdehyde: step 1/1. In terms of biological role, catalyzes the reduction of 1-pyrroline-5-carboxylate (PCA) to L-proline. The sequence is that of Pyrroline-5-carboxylate reductase from Methanosarcina acetivorans (strain ATCC 35395 / DSM 2834 / JCM 12185 / C2A).